Consider the following 145-residue polypeptide: Protein FAM216B (145 aa).

A disordered region spans residues 92–121 (TKRASAKAGPHRTVPQRAAGRTRTQPSARP).

The protein belongs to the FAM216 family.

The sequence is that of Protein FAM216B (FAM216B) from Bos taurus (Bovine).